Reading from the N-terminus, the 197-residue chain is Small ribosomal subunit protein uS4c (197 aa).

The S4 RNA-binding domain maps to 84 to 143 (MRLDNIIFQLGMASTIPAARQLVCHRHILVNHRVVDIPSYRCKPRDIISIRNRPTSANAL).

This sequence belongs to the universal ribosomal protein uS4 family. In terms of assembly, part of the 30S ribosomal subunit. Contacts protein S5. The interaction surface between S4 and S5 is involved in control of translational fidelity.

It is found in the plastid. Its subcellular location is the chloroplast. Functionally, one of the primary rRNA binding proteins, it binds directly to 16S rRNA where it nucleates assembly of the body of the 30S subunit. In terms of biological role, with S5 and S12 plays an important role in translational accuracy. This Adiantum capillus-veneris (Maidenhair fern) protein is Small ribosomal subunit protein uS4c (rps4).